A 757-amino-acid polypeptide reads, in one-letter code: Transcription factor FBD3 (757 aa).

Residues 1–24 (MSSKRLSQNEQEKSPGTGPPTHKR) are disordered. The zn(2)-C6 fungal-type DNA-binding region spans 31–58 (CNACRMRKSRCDGHRPSCSSCLSLGVNC). 2 disordered regions span residues 106–161 (GGTD…DANT) and 202–222 (VAPS…TDVP). Residues 111-120 (NNHHNNHDSP) show a composition bias toward basic and acidic residues. Residues 125-135 (TIAQSITSSRP) are compositionally biased toward polar residues.

The protein resides in the nucleus. Transcription factor; part of the Fusarium detoxification of benzoxazolinone cluster involved in the degradation of benzoxazolinones produced by the host plant. Maize, wheat, and rye produce the 2 benzoxazinone phytoanticipins 2,4-dihy-droxy-7-methoxy-1,4-benzoxazin-3-one (DIMBOA) and 2,4-dihydroxy-1,4-benzoxazin-3-one (DIBOA) that, due to their inherent instability once released, spontaneously degrade to the more stable corresponding benzoxazolinones, 6-methoxy-2-benzoxazolinone (MBOA) and 2-benzoxazolinone (BOA), respectively. FDB3 controls the transcription of the FDB gene cluster in response to 6-methoxy-2-benzoxazolinone (MBOA). This chain is Transcription factor FBD3, found in Fusarium pseudograminearum (strain CS3096) (Wheat and barley crown-rot fungus).